The chain runs to 719 residues: Catalase-3 (719 aa).

The first 18 residues, 1–18, serve as a signal peptide directing secretion; that stretch reads MRVNALLPLSGLIGTALA. The propeptide occupies 19–30; it reads ACPFADPSALGR. Residues H102 and N175 contribute to the active site. Y389 is a heme binding site.

This sequence belongs to the catalase family. The cofactor is heme.

It carries out the reaction 2 H2O2 = O2 + 2 H2O. In terms of biological role, occurs in almost all aerobically respiring organisms and serves to protect cells from the toxic effects of hydrogen peroxide. This chain is Catalase-3 (cat-3), found in Neurospora crassa (strain ATCC 24698 / 74-OR23-1A / CBS 708.71 / DSM 1257 / FGSC 987).